The chain runs to 268 residues: tRNA pseudouridine synthase A (268 aa).

The active-site Nucleophile is Asp-52. Position 110 (Tyr-110) interacts with substrate.

Belongs to the tRNA pseudouridine synthase TruA family. Homodimer.

The enzyme catalyses uridine(38/39/40) in tRNA = pseudouridine(38/39/40) in tRNA. Formation of pseudouridine at positions 38, 39 and 40 in the anticodon stem and loop of transfer RNAs. The chain is tRNA pseudouridine synthase A from Prochlorococcus marinus (strain MIT 9515).